The chain runs to 658 residues: Cysteine-rich receptor-like protein kinase 14 (658 aa).

An N-terminal signal peptide occupies residues 1-22 (MELKNLFPIFWFVLVGFAVVSA). Gnk2-homologous domains lie at 23–125 (QECG…NSSF) and 131–240 (AEPH…LFPF). Residues 23–277 (QECGKTGFFV…ATKKGSITIS (255 aa)) lie on the Extracellular side of the membrane. N-linked (GlcNAc...) asparagine glycans are attached at residues Asn-51, Asn-60, Asn-102, Asn-122, and Asn-146. The helical transmembrane segment at 278–298 (IGIVWAIIIPTVIVVFLVLLA) threads the bilayer. Over 299 to 658 (LGFVVYRRRK…DVTITDFEPR (360 aa)) the chain is Cytoplasmic. Residues 337 to 614 (FSESNIIGRG…NMMLINNSYV (278 aa)) form the Protein kinase domain. Residues 343–351 (IGRGGFGEV) and Lys-364 contribute to the ATP site. Tyr-409 is modified (phosphotyrosine). The active-site Proton acceptor is Asp-461. Ser-465 is subject to Phosphoserine. The residue at position 501 (Thr-501) is a Phosphothreonine. Phosphotyrosine is present on Tyr-509.

It belongs to the protein kinase superfamily. Ser/Thr protein kinase family. CRK subfamily.

It localises to the membrane. The catalysed reaction is L-seryl-[protein] + ATP = O-phospho-L-seryl-[protein] + ADP + H(+). The enzyme catalyses L-threonyl-[protein] + ATP = O-phospho-L-threonyl-[protein] + ADP + H(+). The chain is Cysteine-rich receptor-like protein kinase 14 (CRK14) from Arabidopsis thaliana (Mouse-ear cress).